Here is a 59-residue protein sequence, read N- to C-terminus: Large ribosomal subunit protein bL32c (59 aa).

The disordered stretch occupies residues 1 to 20 (MAVPKKRTSKSKKRIRKSVW).

This sequence belongs to the bacterial ribosomal protein bL32 family.

The protein localises to the plastid. Its subcellular location is the chloroplast. The protein is Large ribosomal subunit protein bL32c of Angiopteris evecta (Mule's foot fern).